A 281-amino-acid chain; its full sequence is 4-hydroxy-3-methylbut-2-enyl diphosphate reductase (281 aa).

Cysteine 12 contacts [4Fe-4S] cluster. Positions 41 and 74 each coordinate (2E)-4-hydroxy-3-methylbut-2-enyl diphosphate. Dimethylallyl diphosphate is bound by residues histidine 41 and histidine 74. Residues histidine 41 and histidine 74 each contribute to the isopentenyl diphosphate site. Residue cysteine 96 participates in [4Fe-4S] cluster binding. Residue histidine 124 coordinates (2E)-4-hydroxy-3-methylbut-2-enyl diphosphate. Histidine 124 is a binding site for dimethylallyl diphosphate. Histidine 124 is a binding site for isopentenyl diphosphate. Glutamate 126 acts as the Proton donor in catalysis. Threonine 164 contacts (2E)-4-hydroxy-3-methylbut-2-enyl diphosphate. Cysteine 193 is a binding site for [4Fe-4S] cluster. Positions 221, 223, and 265 each coordinate (2E)-4-hydroxy-3-methylbut-2-enyl diphosphate. Residues serine 221, asparagine 223, and serine 265 each coordinate dimethylallyl diphosphate. Positions 221, 223, and 265 each coordinate isopentenyl diphosphate.

It belongs to the IspH family. [4Fe-4S] cluster serves as cofactor.

The enzyme catalyses isopentenyl diphosphate + 2 oxidized [2Fe-2S]-[ferredoxin] + H2O = (2E)-4-hydroxy-3-methylbut-2-enyl diphosphate + 2 reduced [2Fe-2S]-[ferredoxin] + 2 H(+). It carries out the reaction dimethylallyl diphosphate + 2 oxidized [2Fe-2S]-[ferredoxin] + H2O = (2E)-4-hydroxy-3-methylbut-2-enyl diphosphate + 2 reduced [2Fe-2S]-[ferredoxin] + 2 H(+). The protein operates within isoprenoid biosynthesis; dimethylallyl diphosphate biosynthesis; dimethylallyl diphosphate from (2E)-4-hydroxy-3-methylbutenyl diphosphate: step 1/1. Its pathway is isoprenoid biosynthesis; isopentenyl diphosphate biosynthesis via DXP pathway; isopentenyl diphosphate from 1-deoxy-D-xylulose 5-phosphate: step 6/6. In terms of biological role, catalyzes the conversion of 1-hydroxy-2-methyl-2-(E)-butenyl 4-diphosphate (HMBPP) into a mixture of isopentenyl diphosphate (IPP) and dimethylallyl diphosphate (DMAPP). Acts in the terminal step of the DOXP/MEP pathway for isoprenoid precursor biosynthesis. The polypeptide is 4-hydroxy-3-methylbut-2-enyl diphosphate reductase (Nitratidesulfovibrio vulgaris (strain DSM 19637 / Miyazaki F) (Desulfovibrio vulgaris)).